The chain runs to 429 residues: Serine--tRNA ligase (429 aa).

Residue threonine 236–glutamate 238 participates in L-serine binding. Arginine 267 to glutamate 269 contributes to the ATP binding site. Glutamate 290 serves as a coordination point for L-serine. Glutamate 354–serine 357 is a binding site for ATP. L-serine is bound at residue serine 390.

This sequence belongs to the class-II aminoacyl-tRNA synthetase family. Type-1 seryl-tRNA synthetase subfamily. In terms of assembly, homodimer. The tRNA molecule binds across the dimer.

It is found in the cytoplasm. The enzyme catalyses tRNA(Ser) + L-serine + ATP = L-seryl-tRNA(Ser) + AMP + diphosphate + H(+). The catalysed reaction is tRNA(Sec) + L-serine + ATP = L-seryl-tRNA(Sec) + AMP + diphosphate + H(+). It functions in the pathway aminoacyl-tRNA biosynthesis; selenocysteinyl-tRNA(Sec) biosynthesis; L-seryl-tRNA(Sec) from L-serine and tRNA(Sec): step 1/1. Catalyzes the attachment of serine to tRNA(Ser). Is also able to aminoacylate tRNA(Sec) with serine, to form the misacylated tRNA L-seryl-tRNA(Sec), which will be further converted into selenocysteinyl-tRNA(Sec). The sequence is that of Serine--tRNA ligase from Alcanivorax borkumensis (strain ATCC 700651 / DSM 11573 / NCIMB 13689 / SK2).